Consider the following 454-residue polypeptide: Bifunctional protein GlmU (454 aa).

Residues 1 to 231 (MDRATVSLIV…EAETLGVNTR (231 aa)) form a pyrophosphorylase region. Residues 11–14 (LAAG), Lys-25, Gln-78, 83–84 (GT), 106–108 (YGD), Gly-143, Glu-157, Asn-172, and Asn-229 each bind UDP-N-acetyl-alpha-D-glucosamine. Asp-108 contributes to the Mg(2+) binding site. Residue Asn-229 coordinates Mg(2+). Residues 232–252 (AQLAEAEAEFQKRARAAALED) are linker. The tract at residues 253 to 454 (GVTLTAPDTV…AKAAKKKEAP (202 aa)) is N-acetyltransferase. The UDP-N-acetyl-alpha-D-glucosamine site is built by Arg-318 and Lys-336. The active-site Proton acceptor is His-348. The UDP-N-acetyl-alpha-D-glucosamine site is built by Tyr-351 and Asn-362. Acetyl-CoA contacts are provided by residues Ala-365, 371 to 372 (NY), Ser-390, Ser-408, and Arg-425.

This sequence in the N-terminal section; belongs to the N-acetylglucosamine-1-phosphate uridyltransferase family. It in the C-terminal section; belongs to the transferase hexapeptide repeat family. Homotrimer. Mg(2+) serves as cofactor.

Its subcellular location is the cytoplasm. It catalyses the reaction alpha-D-glucosamine 1-phosphate + acetyl-CoA = N-acetyl-alpha-D-glucosamine 1-phosphate + CoA + H(+). The catalysed reaction is N-acetyl-alpha-D-glucosamine 1-phosphate + UTP + H(+) = UDP-N-acetyl-alpha-D-glucosamine + diphosphate. It participates in nucleotide-sugar biosynthesis; UDP-N-acetyl-alpha-D-glucosamine biosynthesis; N-acetyl-alpha-D-glucosamine 1-phosphate from alpha-D-glucosamine 6-phosphate (route II): step 2/2. It functions in the pathway nucleotide-sugar biosynthesis; UDP-N-acetyl-alpha-D-glucosamine biosynthesis; UDP-N-acetyl-alpha-D-glucosamine from N-acetyl-alpha-D-glucosamine 1-phosphate: step 1/1. Its pathway is bacterial outer membrane biogenesis; LPS lipid A biosynthesis. Catalyzes the last two sequential reactions in the de novo biosynthetic pathway for UDP-N-acetylglucosamine (UDP-GlcNAc). The C-terminal domain catalyzes the transfer of acetyl group from acetyl coenzyme A to glucosamine-1-phosphate (GlcN-1-P) to produce N-acetylglucosamine-1-phosphate (GlcNAc-1-P), which is converted into UDP-GlcNAc by the transfer of uridine 5-monophosphate (from uridine 5-triphosphate), a reaction catalyzed by the N-terminal domain. The sequence is that of Bifunctional protein GlmU from Cereibacter sphaeroides (strain ATCC 17023 / DSM 158 / JCM 6121 / CCUG 31486 / LMG 2827 / NBRC 12203 / NCIMB 8253 / ATH 2.4.1.) (Rhodobacter sphaeroides).